A 425-amino-acid polypeptide reads, in one-letter code: E3 ubiquitin-protein ligase TRIM31 (425 aa).

The RING-type zinc finger occupies 16–57; it reads CPICLDILQKPVTIDCGHNFCLKCITQIGETSCGFFKCPLCK. A B box-type zinc finger spans residues 90–131; the sequence is RKEATCPRHQEMFHYFCEDDGKFLCFVCRESKDHKSHNVSLI. Zn(2+) contacts are provided by Cys95, His98, Cys117, and His123. Coiled coils occupy residues 126-162 and 270-307; these read HNVSLIEEAAQNYQGQIQEQIQVLQQKEKETVQVKAQ and LELEKKLSEAKSRHDSITGSLKKFKDQLQADRKKDENR. The segment at 328 to 360 is disordered; the sequence is HKMNKTSEPGSSSAGGRTTSGPPNHHSSAPSHS. Residues 336–360 are compositionally biased toward low complexity; sequence PGSSSAGGRTTSGPPNHHSSAPSHS.

The protein belongs to the TRIM/RBCC family. May form oligomers. Interacts with isoform p52shc of SHC1. Post-translationally, auto-ubiquitinated (in vitro). In terms of tissue distribution, up-regulated in gastric adenocarcinomas.

It is found in the cytoplasm. Its subcellular location is the mitochondrion. It catalyses the reaction S-ubiquitinyl-[E2 ubiquitin-conjugating enzyme]-L-cysteine + [acceptor protein]-L-lysine = [E2 ubiquitin-conjugating enzyme]-L-cysteine + N(6)-ubiquitinyl-[acceptor protein]-L-lysine.. The protein operates within protein modification; protein ubiquitination. E3 ubiquitin-protein ligase that acts as a regulator of antiviral immune response and inflammation by mediating ubiquitination of substrates. Acts as a regulator of innate immune defense against viruses by mediating 'Lys-63'-linked ubiquitination of MAVS, promoting MAVS polymerization and formation of three-stranded helical filaments on mitochondria. Acts as a negative regulator of the NLRP3 inflammasome by catalyzing 'Lys-48'-linked ubiquitination of NLRP3, leading to its degradation. Regulator of Src-induced anchorage independent cell growth. The chain is E3 ubiquitin-protein ligase TRIM31 from Homo sapiens (Human).